The sequence spans 163 residues: Probable cobalt-precorrin-6B C(15)-methyltransferase (decarboxylating) (163 aa).

Residues Thr-6, 30–34 (GCGSG), Asp-51, and Gly-75 each bind S-adenosyl-L-methionine.

This sequence belongs to the methyltransferase superfamily. Archaeal-type CbiT family.

It carries out the reaction Co-precorrin-6B + S-adenosyl-L-methionine = Co-precorrin-7 + S-adenosyl-L-homocysteine + CO2. The protein operates within cofactor biosynthesis; adenosylcobalamin biosynthesis; cob(II)yrinate a,c-diamide from sirohydrochlorin (anaerobic route): step 8/10. Its function is as follows. Catalyzes the methylation of C-15 in cobalt-precorrin-6B followed by the decarboxylation of C-12 to form cobalt-precorrin-7. The sequence is that of Probable cobalt-precorrin-6B C(15)-methyltransferase (decarboxylating) from Archaeoglobus fulgidus (strain ATCC 49558 / DSM 4304 / JCM 9628 / NBRC 100126 / VC-16).